A 600-amino-acid chain; its full sequence is Aspartate--tRNA(Asp/Asn) ligase (600 aa).

Glu-181 contacts L-aspartate. Residues Gln-205–Lys-208 are aspartate. Arg-227 provides a ligand contact to L-aspartate. Residues Arg-227–Glu-229 and Gln-236 contribute to the ATP site. Residue His-455 coordinates L-aspartate. An ATP-binding site is contributed by Glu-490. Arg-497 is a binding site for L-aspartate. Gly-542 to Arg-545 is a binding site for ATP.

The protein belongs to the class-II aminoacyl-tRNA synthetase family. Type 1 subfamily. Homodimer.

The protein resides in the cytoplasm. The enzyme catalyses tRNA(Asx) + L-aspartate + ATP = L-aspartyl-tRNA(Asx) + AMP + diphosphate. Aspartyl-tRNA synthetase with relaxed tRNA specificity since it is able to aspartylate not only its cognate tRNA(Asp) but also tRNA(Asn). Reaction proceeds in two steps: L-aspartate is first activated by ATP to form Asp-AMP and then transferred to the acceptor end of tRNA(Asp/Asn). The protein is Aspartate--tRNA(Asp/Asn) ligase of Methylacidiphilum infernorum (isolate V4) (Methylokorus infernorum (strain V4)).